Consider the following 148-residue polypeptide: 3-dehydroquinate dehydratase (148 aa).

The active-site Proton acceptor is Y23. Substrate-binding residues include N75, H81, and D88. H101 functions as the Proton donor in the catalytic mechanism. Substrate contacts are provided by residues 102–103 (LS) and R112.

It belongs to the type-II 3-dehydroquinase family. Homododecamer.

It carries out the reaction 3-dehydroquinate = 3-dehydroshikimate + H2O. Its pathway is metabolic intermediate biosynthesis; chorismate biosynthesis; chorismate from D-erythrose 4-phosphate and phosphoenolpyruvate: step 3/7. Catalyzes a trans-dehydration via an enolate intermediate. In Halorhodospira halophila (strain DSM 244 / SL1) (Ectothiorhodospira halophila (strain DSM 244 / SL1)), this protein is 3-dehydroquinate dehydratase.